A 268-amino-acid polypeptide reads, in one-letter code: Tryptophan synthase alpha chain (268 aa).

Active-site proton acceptor residues include E49 and D60.

It belongs to the TrpA family. In terms of assembly, tetramer of two alpha and two beta chains.

The enzyme catalyses (1S,2R)-1-C-(indol-3-yl)glycerol 3-phosphate + L-serine = D-glyceraldehyde 3-phosphate + L-tryptophan + H2O. Its pathway is amino-acid biosynthesis; L-tryptophan biosynthesis; L-tryptophan from chorismate: step 5/5. Its function is as follows. The alpha subunit is responsible for the aldol cleavage of indoleglycerol phosphate to indole and glyceraldehyde 3-phosphate. This is Tryptophan synthase alpha chain from Yersinia pestis bv. Antiqua (strain Antiqua).